The primary structure comprises 212 residues: Tubulin alpha chain (212 aa).

GTP is bound by residues asparagine 3 and asparagine 25. Glutamate 51 is a catalytic residue.

It belongs to the tubulin family. As to quaternary structure, dimer of alpha and beta chains. A typical microtubule is a hollow water-filled tube with an outer diameter of 25 nm and an inner diameter of 15 nM. Alpha-beta heterodimers associate head-to-tail to form protofilaments running lengthwise along the microtubule wall with the beta-tubulin subunit facing the microtubule plus end conferring a structural polarity. Microtubules usually have 13 protofilaments but different protofilament numbers can be found in some organisms and specialized cells. Mg(2+) serves as cofactor.

The protein localises to the cytoplasm. It is found in the cytoskeleton. The catalysed reaction is GTP + H2O = GDP + phosphate + H(+). In terms of biological role, tubulin is the major constituent of microtubules, a cylinder consisting of laterally associated linear protofilaments composed of alpha- and beta-tubulin heterodimers. Microtubules grow by the addition of GTP-tubulin dimers to the microtubule end, where a stabilizing cap forms. Below the cap, tubulin dimers are in GDP-bound state, owing to GTPase activity of alpha-tubulin. This chain is Tubulin alpha chain (TUB-A), found in Pneumocystis carinii.